The primary structure comprises 270 residues: Hydroxyethylthiazole kinase (270 aa).

Substrate is bound at residue Met-47. Positions 123 and 169 each coordinate ATP. A substrate-binding site is contributed by Gly-196.

This sequence belongs to the Thz kinase family. Requires Mg(2+) as cofactor.

The enzyme catalyses 5-(2-hydroxyethyl)-4-methylthiazole + ATP = 4-methyl-5-(2-phosphooxyethyl)-thiazole + ADP + H(+). The protein operates within cofactor biosynthesis; thiamine diphosphate biosynthesis; 4-methyl-5-(2-phosphoethyl)-thiazole from 5-(2-hydroxyethyl)-4-methylthiazole: step 1/1. Catalyzes the phosphorylation of the hydroxyl group of 4-methyl-5-beta-hydroxyethylthiazole (THZ). This Roseiflexus castenholzii (strain DSM 13941 / HLO8) protein is Hydroxyethylthiazole kinase.